We begin with the raw amino-acid sequence, 293 residues long: N-acetylmannosamine kinase (293 aa).

ATP contacts are provided by residues 5–12 (AIDIGGTK) and 133–140 (GVGGGLVI). Residues His-157, Cys-167, Cys-169, and Cys-174 each contribute to the Zn(2+) site.

The protein belongs to the ROK (NagC/XylR) family. NanK subfamily. As to quaternary structure, homodimer.

The enzyme catalyses an N-acyl-D-mannosamine + ATP = an N-acyl-D-mannosamine 6-phosphate + ADP + H(+). The protein operates within amino-sugar metabolism; N-acetylneuraminate degradation; D-fructose 6-phosphate from N-acetylneuraminate: step 2/5. In terms of biological role, catalyzes the phosphorylation of N-acetylmannosamine (ManNAc) to ManNAc-6-P. This chain is N-acetylmannosamine kinase, found in Vibrio vulnificus (strain YJ016).